The sequence spans 298 residues: Cytosolic Fe-S cluster assembly factor CFD1 (298 aa).

25–32 contacts ATP; the sequence is GKGGVGKS. [4Fe-4S] cluster contacts are provided by Cys-215 and Cys-218.

This sequence belongs to the Mrp/NBP35 ATP-binding proteins family. NUBP2/CFD1 subfamily. As to quaternary structure, heterotetramer of 2 NBP35 and 2 CFD1 chains. [4Fe-4S] cluster is required as a cofactor.

Its subcellular location is the cytoplasm. In terms of biological role, component of the cytosolic iron-sulfur (Fe/S) protein assembly (CIA) machinery. Required for maturation of extramitochondrial Fe-S proteins. The NBP35-CFD1 heterotetramer forms a Fe-S scaffold complex, mediating the de novo assembly of an Fe-S cluster and its transfer to target apoproteins. Required for biogenesis and export of both ribosomal subunits, which may reflect a role in assembly of the Fe/S clusters in RLI1, a protein which performs rRNA processing and ribosome export. The protein is Cytosolic Fe-S cluster assembly factor CFD1 of Debaryomyces hansenii (strain ATCC 36239 / CBS 767 / BCRC 21394 / JCM 1990 / NBRC 0083 / IGC 2968) (Yeast).